A 284-amino-acid polypeptide reads, in one-letter code: MSQSSAEAPVTTATGPLVIKLGGEVVGGPALAILSSDLAALTRAGARAIVVHGGGAQATRLQERLGIPVRQVAGQRVTDADTLDVMKMVVAGKLNVDLCAALVAAGARPVGLHGASGPALSAVKRPPQVYAGAGPEPVDLGLVGDITGVDRGLLELLGSGGYLPVLACLGAGADGQAYNINADTVANRVAIELGAAGLFLVSDVPGVLRDVADPASRIPSLTVAEGRALIASGAVTRGMIPKLEESFAALAEGVRRIHILGRLKPGDLAREASEPGSIGTVLVP.

Substrate is bound by residues 54-55 (GG), Arg-76, and Asn-179.

It belongs to the acetylglutamate kinase family. ArgB subfamily.

It is found in the cytoplasm. The enzyme catalyses N-acetyl-L-glutamate + ATP = N-acetyl-L-glutamyl 5-phosphate + ADP. The protein operates within amino-acid biosynthesis; L-arginine biosynthesis; N(2)-acetyl-L-ornithine from L-glutamate: step 2/4. In terms of biological role, catalyzes the ATP-dependent phosphorylation of N-acetyl-L-glutamate. The polypeptide is Acetylglutamate kinase (Sorangium cellulosum (strain So ce56) (Polyangium cellulosum (strain So ce56))).